Consider the following 345-residue polypeptide: Platelet-derived growth factor C (345 aa).

The N-terminal stretch at 1-22 (MLLLGLLLLTSALAGRRHGAAA) is a signal peptide. One can recognise a CUB domain in the interval 46–163 (HEKIITVTSN…PGFCIHYTLL (118 aa)). Asparagine 55 carries an N-linked (GlcNAc...) asparagine glycan. 4 cysteine pairs are disulfide-bonded: cysteine 104-cysteine 124, cysteine 250-cysteine 294, cysteine 280-cysteine 335, and cysteine 287-cysteine 337.

It belongs to the PDGF/VEGF growth factor family. In terms of assembly, homodimer; disulfide-linked. Interacts with PDGFRA homodimers, and with heterodimers formed by PDGFRA and PDGFRB. Proteolytic removal of the N-terminal CUB domain releasing the core domain is necessary for unmasking the receptor-binding epitopes of the core domain. Cleavage after basic residues in the hinge region (region connecting the CUB and growth factor domains) gives rise to the receptor-binding form.

It is found in the secreted. Growth factor that plays an essential role in the regulation of embryonic development, cell proliferation, cell migration, survival and chemotaxis. Potent mitogen and chemoattractant for cells of mesenchymal origin. Required for normal skeleton formation during embryonic development. Required for normal skin morphogenesis during embryonic development. Plays an important role in wound healing, in angiogenesis and blood vessel development. This Gallus gallus (Chicken) protein is Platelet-derived growth factor C (PDGFC).